Consider the following 369-residue polypeptide: MEFEVKKTFGKARLGVMKLHHGAVETPVFMPVGTNASVKLLTPRDLEEAGAEIILSNTFHLMLKPGVEIIKLHRGLHNFMGWKRPILTDSGGFQVFSLPKIRIDDEGVVFRSPIDGSKVFLNPEISMEVQIALGSDICMVFDHCPVPDADYEEVKEATERTYRWALRSKKAFKTENQALFGIVQGGIYPDLRRESALQLTSIGFDGYAIGGLSIGEERSLTLEMTEVTVEFLPEDKPRYFMGGGSPELILELVDRGVDMFDSVFPTRIARHGTALTWNGKLNLKASYNKRSLEPVDERCGCYTCKNFTRSYIHHLFDRGEVLGQILLTIHNINFMISLMKEVRRSIESGTFKELKSKVVEVYSSGGVNV.

The Proton acceptor role is filled by Asp-89. Substrate-binding positions include Asp-89–Phe-93, Asp-142, Gln-184, and Gly-211. The tract at residues Gly-242 to Leu-248 is RNA binding. Asp-261 functions as the Nucleophile in the catalytic mechanism. An RNA binding; important for wobble base 34 recognition region spans residues Thr-266 to Arg-270. Cys-299, Cys-301, Cys-304, and His-330 together coordinate Zn(2+).

It belongs to the queuine tRNA-ribosyltransferase family. As to quaternary structure, homodimer. Within each dimer, one monomer is responsible for RNA recognition and catalysis, while the other monomer binds to the replacement base PreQ1. Requires Zn(2+) as cofactor.

It catalyses the reaction 7-aminomethyl-7-carbaguanine + guanosine(34) in tRNA = 7-aminomethyl-7-carbaguanosine(34) in tRNA + guanine. It functions in the pathway tRNA modification; tRNA-queuosine biosynthesis. Catalyzes the base-exchange of a guanine (G) residue with the queuine precursor 7-aminomethyl-7-deazaguanine (PreQ1) at position 34 (anticodon wobble position) in tRNAs with GU(N) anticodons (tRNA-Asp, -Asn, -His and -Tyr). Catalysis occurs through a double-displacement mechanism. The nucleophile active site attacks the C1' of nucleotide 34 to detach the guanine base from the RNA, forming a covalent enzyme-RNA intermediate. The proton acceptor active site deprotonates the incoming PreQ1, allowing a nucleophilic attack on the C1' of the ribose to form the product. After dissociation, two additional enzymatic reactions on the tRNA convert PreQ1 to queuine (Q), resulting in the hypermodified nucleoside queuosine (7-(((4,5-cis-dihydroxy-2-cyclopenten-1-yl)amino)methyl)-7-deazaguanosine). The sequence is that of Queuine tRNA-ribosyltransferase from Thermotoga maritima (strain ATCC 43589 / DSM 3109 / JCM 10099 / NBRC 100826 / MSB8).